A 127-amino-acid polypeptide reads, in one-letter code: Transcription antitermination protein NusB (127 aa).

It belongs to the NusB family.

Functionally, involved in transcription antitermination. Required for transcription of ribosomal RNA (rRNA) genes. Binds specifically to the boxA antiterminator sequence of the ribosomal RNA (rrn) operons. The protein is Transcription antitermination protein NusB of Lysinibacillus sphaericus (strain C3-41).